The sequence spans 550 residues: DNA mismatch repair protein MutL (550 aa).

It belongs to the DNA mismatch repair MutL/HexB family.

Functionally, this protein is involved in the repair of mismatches in DNA. It is required for dam-dependent methyl-directed DNA mismatch repair. May act as a 'molecular matchmaker', a protein that promotes the formation of a stable complex between two or more DNA-binding proteins in an ATP-dependent manner without itself being part of a final effector complex. The chain is DNA mismatch repair protein MutL from Microcystis aeruginosa (strain NIES-843 / IAM M-2473).